A 579-amino-acid chain; its full sequence is Adenine deaminase (579 aa).

Belongs to the metallo-dependent hydrolases superfamily. Adenine deaminase family. Requires Mn(2+) as cofactor.

It carries out the reaction adenine + H2O + H(+) = hypoxanthine + NH4(+). This Listeria welshimeri serovar 6b (strain ATCC 35897 / DSM 20650 / CCUG 15529 / CIP 8149 / NCTC 11857 / SLCC 5334 / V8) protein is Adenine deaminase.